A 120-amino-acid polypeptide reads, in one-letter code: UPF0102 protein Daro_0503 (120 aa).

A disordered region spans residues 1-20 (MQVKANDTTTARGREAEDRA).

This sequence belongs to the UPF0102 family.

The polypeptide is UPF0102 protein Daro_0503 (Dechloromonas aromatica (strain RCB)).